A 409-amino-acid chain; its full sequence is Arginine deiminase (409 aa).

Residue Cys-397 is the Amidino-cysteine intermediate of the active site.

Belongs to the arginine deiminase family.

It is found in the cytoplasm. The catalysed reaction is L-arginine + H2O = L-citrulline + NH4(+). It participates in amino-acid degradation; L-arginine degradation via ADI pathway; carbamoyl phosphate from L-arginine: step 1/2. This is Arginine deiminase (arcA) from Metamycoplasma hominis (Mycoplasma hominis).